The following is a 949-amino-acid chain: Glycine dehydrogenase (decarboxylating) (949 aa).

Lys700 carries the N6-(pyridoxal phosphate)lysine modification.

The protein belongs to the GcvP family. As to quaternary structure, the glycine cleavage system is composed of four proteins: P, T, L and H. Requires pyridoxal 5'-phosphate as cofactor.

The enzyme catalyses N(6)-[(R)-lipoyl]-L-lysyl-[glycine-cleavage complex H protein] + glycine + H(+) = N(6)-[(R)-S(8)-aminomethyldihydrolipoyl]-L-lysyl-[glycine-cleavage complex H protein] + CO2. Its function is as follows. The glycine cleavage system catalyzes the degradation of glycine. The P protein binds the alpha-amino group of glycine through its pyridoxal phosphate cofactor; CO(2) is released and the remaining methylamine moiety is then transferred to the lipoamide cofactor of the H protein. The sequence is that of Glycine dehydrogenase (decarboxylating) from Christiangramia forsetii (strain DSM 17595 / CGMCC 1.15422 / KT0803) (Gramella forsetii).